Reading from the N-terminus, the 331-residue chain is Tetraacyldisaccharide 4'-kinase (331 aa).

Position 60-67 (60-67) interacts with ATP; it reads TVGGTGKT.

The protein belongs to the LpxK family.

It carries out the reaction a lipid A disaccharide + ATP = a lipid IVA + ADP + H(+). The protein operates within glycolipid biosynthesis; lipid IV(A) biosynthesis; lipid IV(A) from (3R)-3-hydroxytetradecanoyl-[acyl-carrier-protein] and UDP-N-acetyl-alpha-D-glucosamine: step 6/6. Its function is as follows. Transfers the gamma-phosphate of ATP to the 4'-position of a tetraacyldisaccharide 1-phosphate intermediate (termed DS-1-P) to form tetraacyldisaccharide 1,4'-bis-phosphate (lipid IVA). The sequence is that of Tetraacyldisaccharide 4'-kinase from Pseudomonas syringae pv. syringae (strain B728a).